The following is a 92-amino-acid chain: Protein EMB-1 (92 aa).

Composition is skewed to basic and acidic residues over residues 1-16, 37-61, and 72-92; these read MASQQEKKELDARARQ, AEGRSKGGQTRKEQLGGEGYHEMGR, and GGERAEQEGIDIDESKFRTKK. The disordered stretch occupies residues 1–92; the sequence is MASQQEKKEL…IDESKFRTKK (92 aa).

Belongs to the small hydrophilic plant seed protein family. As to expression, expressed in embryogenic cells, somatic embryos and seeds at the later stages of development. In the embryos, expressed in the procambium, the root and shoot meristem and the protoderm of the cotyledons. Not detected in the endosperm or the aleurone layer, in young leaves or roots.

The protein localises to the nucleus. This Daucus carota (Wild carrot) protein is Protein EMB-1.